Here is a 329-residue protein sequence, read N- to C-terminus: uncharacterized protein (329 aa).

Helical transmembrane passes span 13–35 and 229–248; these read IPVL…WATI and VIPA…SVVY.

Its subcellular location is the cell membrane. This is an uncharacterized protein from Archaeoglobus fulgidus (strain ATCC 49558 / DSM 4304 / JCM 9628 / NBRC 100126 / VC-16).